Reading from the N-terminus, the 620-residue chain is Methionine--tRNA ligase (620 aa).

Residues 11-21 carry the 'HIGH' region motif; it reads PYANGPRHIGH. Cysteine 143, cysteine 146, cysteine 156, and cysteine 159 together coordinate Zn(2+). The 'KMSKS' region motif lies at 347-351; the sequence is KFSSS. Serine 350 contributes to the ATP binding site.

The protein belongs to the class-I aminoacyl-tRNA synthetase family. MetG type 1 subfamily. In terms of assembly, monomer. Zn(2+) serves as cofactor.

Its subcellular location is the cytoplasm. It carries out the reaction tRNA(Met) + L-methionine + ATP = L-methionyl-tRNA(Met) + AMP + diphosphate. In terms of biological role, is required not only for elongation of protein synthesis but also for the initiation of all mRNA translation through initiator tRNA(fMet) aminoacylation. In Bifidobacterium adolescentis (strain ATCC 15703 / DSM 20083 / NCTC 11814 / E194a), this protein is Methionine--tRNA ligase.